The primary structure comprises 202 residues: Inosine triphosphate pyrophosphatase (202 aa).

8 to 13 (TGNANK) lines the ITP pocket. Residue E55 participates in Mg(2+) binding. Residues K67, 83–84 (DT), K100, 159–162 (FGWD), K182, and 187–188 (HR) each bind ITP.

This sequence belongs to the HAM1 NTPase family. As to quaternary structure, homodimer. The cofactor is Mg(2+). Requires Mn(2+) as cofactor.

The protein localises to the cytoplasm. It is found in the nucleus. The enzyme catalyses ITP + H2O = IMP + diphosphate + H(+). It carries out the reaction dITP + H2O = dIMP + diphosphate + H(+). The catalysed reaction is XTP + H2O = XMP + diphosphate + H(+). In terms of biological role, pyrophosphatase that hydrolyzes non-canonical purine nucleotides such as inosine triphosphate (ITP), deoxyinosine triphosphate (dITP) or xanthosine 5'-triphosphate (XTP) to their respective monophosphate derivatives. The enzyme does not distinguish between the deoxy- and ribose forms. Probably excludes non-canonical purines from RNA and DNA precursor pools, thus preventing their incorporation into RNA and DNA and avoiding chromosomal lesions. This Candida albicans (strain SC5314 / ATCC MYA-2876) (Yeast) protein is Inosine triphosphate pyrophosphatase.